The primary structure comprises 445 residues: tRNA-2-methylthio-N(6)-dimethylallyladenosine synthase (445 aa).

The 122-residue stretch at 3–124 (KKLYIKTYGC…LPELISKVVR (122 aa)) folds into the MTTase N-terminal domain. Positions 12, 48, 87, 162, 166, and 169 each coordinate [4Fe-4S] cluster. The Radical SAM core domain maps to 148 to 380 (YPQGTSAFIS…QQELMAQQLA (233 aa)). A TRAM domain is found at 383–445 (TSCVGSTMKV…SLNSLTGEIL (63 aa)).

Belongs to the methylthiotransferase family. MiaB subfamily. In terms of assembly, monomer. It depends on [4Fe-4S] cluster as a cofactor.

The protein localises to the cytoplasm. The enzyme catalyses N(6)-dimethylallyladenosine(37) in tRNA + (sulfur carrier)-SH + AH2 + 2 S-adenosyl-L-methionine = 2-methylsulfanyl-N(6)-dimethylallyladenosine(37) in tRNA + (sulfur carrier)-H + 5'-deoxyadenosine + L-methionine + A + S-adenosyl-L-homocysteine + 2 H(+). Its function is as follows. Catalyzes the methylthiolation of N6-(dimethylallyl)adenosine (i(6)A), leading to the formation of 2-methylthio-N6-(dimethylallyl)adenosine (ms(2)i(6)A) at position 37 in tRNAs that read codons beginning with uridine. The sequence is that of tRNA-2-methylthio-N(6)-dimethylallyladenosine synthase from Rickettsia rickettsii (strain Iowa).